We begin with the raw amino-acid sequence, 262 residues long: Nodulation protein J (262 aa).

Residues 33-259 (ASILGNLAEP…FLSVGLLQRR (227 aa)) enclose the ABC transmembrane type-2 domain. Helical transmembrane passes span 35-55 (ILGN…GLGA), 62-82 (GIPY…MISA), 125-145 (ALLA…ASWP), 147-167 (VLFA…LAMI), 177-197 (YFIF…GAVF), and 236-256 (LHIS…VGLL).

Belongs to the ABC-2 integral membrane protein family. Lipooligosaccharide exporter (TC 3.A.1.102) subfamily. As to quaternary structure, the complex is composed of two ATP-binding proteins (NodI) and two transmembrane proteins (NodJ).

It localises to the cell inner membrane. Its function is as follows. Part of the ABC transporter complex NodIJ involved in the export of the nodulation factors (Nod factors), the bacterial signal molecules that induce symbiosis and subsequent nodulation induction. Nod factors are LCO (lipo-chitin oligosaccharide), a modified beta-1,4-linked N-acetylglucosamine oligosaccharide. This subunit encodes the transporter. In Sinorhizobium fredii (strain NBRC 101917 / NGR234), this protein is Nodulation protein J (nodJ).